The chain runs to 314 residues: MGKRVVIALGGNALQQRGQKGSYEEMMDNVRKTARQIAEIIARGYEVVITHGNGPQVGSLLLHMDAGQATYGIPAQPMDVAGAMSQGWIGYMIQQALKNELRKRGMEKKVVTIITQTIVDKNDPAFQNPTKPVGPFYDEETAKRLAREKGWIVKEDSGRGWRRVVPSPDPKGHVEAETIKKLVERGVIVIASGGGGVPVILEDGEIKGVEAVIDKDLAGEKLAEEVNADIFMILTDVNGAALYYGTEKEQWLREVKVEELRKYYEEGHFKAGSMGPKVLAAIRFIEWGGERAIIAHLEKAVEALEGKTGTQVLP.

It belongs to the carbamate kinase family. In terms of assembly, homodimer.

Its subcellular location is the cytoplasm. It catalyses the reaction hydrogencarbonate + NH4(+) + ATP = carbamoyl phosphate + ADP + H2O + H(+). In terms of biological role, carbamate kinase that plays a biosynthetic role in that it produces carbamoyl-phosphate. This is Carbamate kinase (cpkA) from Pyrococcus furiosus (strain ATCC 43587 / DSM 3638 / JCM 8422 / Vc1).